An 810-amino-acid polypeptide reads, in one-letter code: MESFAPTRKGRAVFSADAAATAAPGSAGAGETLDPAKDALIIVPVRGFVLFPGIVMPVVLNGPAAIAAAQEAVRQQRSVGILMQRESGAEEASPLNMHRFGVVANILRYITAQDGGHHLICQGEQRFHVEEFLRERPYLAARVKRIEEPDERSPDIEARFVHLQGQASEALQLLPQTPPELIAAVNSAPSPGALTDLVAAYMDASPAQKQDILETIDLRARMDMVAKLLAQRIEVLRLSQEIGRQTKASLDERQREMLLREQMASIQRQLGEGDGKAQEIAELTEAIAKAKMPAEVEEAARKELRRLERMPDASAEYGMIRTYIDWLIELPWSLPEEAPIDIAEARRILDADHFGLDKIKQRIVEYLAVRKLAPQGKAPILCFVGPPGVGKTSLGQSIARAMGRKFVRVSLGGVHDEAEIRGHRRTYVGALPGNIIQAIRKAGARNCVMMLDEIDKMGASAHGDPGSAMLEVLDPEQNSTFRDNYLAVPFDLSRVVFIATANMLDTVPGPLRDRMEIIALTGYTDREKLEIARRYLVRRQLEANGLKPDQVEIDDDALIEIIRGYTREAGVRNLEREIGRVLRHVAVRIADGSASHVHVSRAELTELLGQQRFEDEVAMRLSVPGVATGLAWTPVGGDILFIEATRAPGHGKLTLTGQLGEVMRESVQAALSLIKSRAAELGVDPESFDKTDIHVHVPAGATPKDGPSAGVAMFIALVSILTGRLVRNDTAMTGEISLRGLVLPVGGIKEKVVAAARAGLTRVLLPARNRRDYDEIPQDTREKLEFVWLEKVDDAMAAAFEGMAATPAPN.

Residues 40 to 233 (LIIVPVRGFV…MVAKLLAQRI (194 aa)) form the Lon N-terminal domain. Position 385 to 392 (385 to 392 (GPPGVGKT)) interacts with ATP. In terms of domain architecture, Lon proteolytic spans 621–802 (LSVPGVATGL…DDAMAAAFEG (182 aa)). Active-site residues include S708 and K751.

This sequence belongs to the peptidase S16 family. As to quaternary structure, homohexamer. Organized in a ring with a central cavity.

Its subcellular location is the cytoplasm. The enzyme catalyses Hydrolysis of proteins in presence of ATP.. Functionally, ATP-dependent serine protease that mediates the selective degradation of mutant and abnormal proteins as well as certain short-lived regulatory proteins. Required for cellular homeostasis and for survival from DNA damage and developmental changes induced by stress. Degrades polypeptides processively to yield small peptide fragments that are 5 to 10 amino acids long. Binds to DNA in a double-stranded, site-specific manner. This is Lon protease from Methylocella silvestris (strain DSM 15510 / CIP 108128 / LMG 27833 / NCIMB 13906 / BL2).